A 1043-amino-acid polypeptide reads, in one-letter code: Sarcoplasmic/endoplasmic reticulum calcium ATPase 2 (1043 aa).

Topologically, residues 1–48 are cytoplasmic; the sequence is MENAHTKTVEEVLGHFGVNESTGLSLEQVKKLKERWGSNELPAEEGKT. Ser38 is modified (phosphoserine). The helical transmembrane segment at 49-69 threads the bilayer; it reads LLELVIEQFEDLLVRILLLAA. At 70–89 the chain is on the lumenal side; sequence CISFVLAWFEEGEETITAFV. A helical transmembrane segment spans residues 90-110; it reads EPFVILLILVANAIVGVWQER. Over 111–253 the chain is Cytoplasmic; that stretch reads NAENAIEALK…QERTPLQQKL (143 aa). The chain crosses the membrane as a helical span at residues 254–273; that stretch reads DEFGEQLSKVISLICIAVWI. Over 274-295 the chain is Lumenal; that stretch reads INIGHFNDPVHGGSWIRGAIYY. 2 positions are modified to 3'-nitrotyrosine: Tyr294 and Tyr295. The helical transmembrane segment at 296 to 313 threads the bilayer; sequence FKIAVALAVAAIPEGLPA. 4 residues coordinate Ca(2+): Val304, Ala305, Ile307, and Glu309. The Cytoplasmic portion of the chain corresponds to 314 to 756; that stretch reads VITTCLALGT…EEGRAIYNNM (443 aa). Catalysis depends on Asp351, which acts as the 4-aspartylphosphate intermediate. Residues Asp351 and Thr353 each coordinate Mg(2+). Position 353 (Thr353) interacts with ATP. At Thr441 the chain carries Phosphothreonine. The ATP site is built by Glu442, Arg489, and Lys514. The residue at position 531 (Ser531) is a Phosphoserine. Position 559 (Arg559) interacts with ATP. The interaction with HAX1 stretch occupies residues 575–594; that stretch reads MHLEDSANFIKYETNLTFVG. Phosphoserine is present on Ser580. ATP is bound by residues Thr624, Gly625, and Asp626. 2 positions are modified to phosphoserine: Ser661 and Ser663. ATP is bound by residues Arg677 and Lys683. Asp702 is a binding site for Mg(2+). Asn705 lines the ATP pocket. Residues 757–776 form a helical membrane-spanning segment; sequence KQFIRYLISSNVGEVVCIFL. 2 residues coordinate Ca(2+): Asn767 and Glu770. At 777-786 the chain is on the lumenal side; that stretch reads TAALGFPEAL. Residues 787–807 form a helical membrane-spanning segment; sequence IPVQLLWVNLVTDGLPATALG. An interaction with PLN region spans residues 787 to 807; sequence IPVQLLWVNLVTDGLPATALG. The segment at 788-1043 is interaction with TMEM64 and PDIA3; sequence PVQLLWVNLV…DTNFSDMFWS (256 aa). Residues Asn795, Thr798, and Asp799 each contribute to the Ca(2+) site. The Cytoplasmic portion of the chain corresponds to 808 to 827; that stretch reads FNPPDLDIMNKPPRNPKEPL. A helical transmembrane segment spans residues 828–850; the sequence is ISGWLFFRYLAIGCYVGAATVGA. Over 851 to 896 the chain is Lumenal; sequence AAWWFIAADGGPRVSFYQLSHFLQCKEDNPDFEGVDCAIFESPYPM. Residues Cys875 and Cys887 are joined by a disulfide bond. Residues 897 to 916 traverse the membrane as a helical segment; sequence TMALSVLVTIEMCNALNSLS. Position 907 (Glu907) interacts with Ca(2+). The Cytoplasmic portion of the chain corresponds to 917–929; it reads ENQSLLRMPPWEN. A helical membrane pass occupies residues 930-948; it reads IWLVGSICLSMSLHFLILY. Residues 931–942 are interaction with PLN; sequence WLVGSICLSMSL. Residues 949-963 are Lumenal-facing; the sequence is VEPLPLIFQITPLNL. A helical transmembrane segment spans residues 964–984; the sequence is TQWLMVLKISLPVILMDETLK. Over 985 to 1043 the chain is Cytoplasmic; it reads FVARNYLEPGKECAQPATKPSCSLSACTDGISWPFVLLIMPLVVWVYSTDTNFSDMFWS.

Belongs to the cation transport ATPase (P-type) (TC 3.A.3) family. Type IIA subfamily. As to quaternary structure, interacts with sarcolipin (SLN); the interaction inhibits ATP2A2 Ca(2+) affinity. Interacts with phospholamban (PLN); the interaction inhibits ATP2A2 Ca(2+) affinity. Interacts with myoregulin (MRLN). Interacts with ARLN and ERLN; the interactions inhibit ATP2A2 Ca(2+) affinity. Interacts with STRIT1/DWORF; the interaction results in activation of ATP2A2. Interacts with the monomeric forms of SLN, PLN, ARLN, ERLN and STRI1/DWORF. Interacts with HAX1. Interacts with S100A8 and S100A9. Interacts with SLC35G1 and STIM1. Interacts with TMEM203. Interacts with TMEM64 and PDIA3. Interacts with TMX1. Interacts with TMX2. Interacts with VMP1; VMP1 competes with PLN and SLN to prevent them from forming an inhibitory complex with ATP2A2. Interacts with ULK1. Interacts with S100A1 in a Ca(2+)-dependent manner. Interacts with TUNAR. Interacts with FLVCR2; this interaction occurs in the absence of heme and promotes ATP2A2 proteasomal degradation; this complex is dissociated upon heme binding. Interacts with FNIP1. In terms of assembly, interacts with TRAM2 (via C-terminus). It depends on Mg(2+) as a cofactor. Post-translationally, nitrated under oxidative stress. Nitration on the two tyrosine residues inhibits catalytic activity. In terms of processing, serotonylated on Gln residues by TGM2 in response to hypoxia, leading to its inactivation. Isoform 2 is highly expressed in heart and slow twitch skeletal muscle. Isoform 1 is widely expressed.

Its subcellular location is the endoplasmic reticulum membrane. The protein localises to the sarcoplasmic reticulum membrane. It carries out the reaction Ca(2+)(in) + ATP + H2O = Ca(2+)(out) + ADP + phosphate + H(+). With respect to regulation, has different conformational states with differential Ca2+ affinity. The E1 conformational state (active form) shows high Ca(2+) affinity, while the E2 state exhibits low Ca(2+) affinity. Binding of ATP allosterically increases its affinity for subsequent binding of Ca2+. Reversibly inhibited by phospholamban (PLN) at low calcium concentrations. PLN inhibits ATP2A2 Ca(2+) affinity by disrupting its allosteric activation by ATP. Inhibited by sarcolipin (SLN) and myoregulin (MRLN). The inhibition is blocked by VMP1. Enhanced by STRIT1/DWORF; STRIT1 increases activity by displacing sarcolipin (SLN), phospholamban (PLN) and myoregulin (MRLN). Stabilizes SERCA2 in its E2 state. This magnesium-dependent enzyme catalyzes the hydrolysis of ATP coupled with the translocation of calcium from the cytosol to the sarcoplasmic reticulum lumen. Involved in autophagy in response to starvation. Upon interaction with VMP1 and activation, controls ER-isolation membrane contacts for autophagosome formation. Also modulates ER contacts with lipid droplets, mitochondria and endosomes. In coordination with FLVCR2 mediates heme-stimulated switching from mitochondrial ATP synthesis to thermogenesis. Its function is as follows. Involved in the regulation of the contraction/relaxation cycle. Acts as a regulator of TNFSF11-mediated Ca(2+) signaling pathways via its interaction with TMEM64 which is critical for the TNFSF11-induced CREB1 activation and mitochondrial ROS generation necessary for proper osteoclast generation. Association between TMEM64 and SERCA2 in the ER leads to cytosolic Ca(2+) spiking for activation of NFATC1 and production of mitochondrial ROS, thereby triggering Ca(2+) signaling cascades that promote osteoclast differentiation and activation. This Rattus norvegicus (Rat) protein is Sarcoplasmic/endoplasmic reticulum calcium ATPase 2 (Atp2a2).